The primary structure comprises 513 residues: Light-independent protochlorophyllide reductase subunit B (513 aa).

[4Fe-4S] cluster is bound at residue Asp-36. Catalysis depends on Asp-299, which acts as the Proton donor. 434–435 contacts substrate; sequence GM.

This sequence belongs to the ChlB/BchB/BchZ family. Protochlorophyllide reductase is composed of three subunits; ChlL, ChlN and ChlB. Forms a heterotetramer of two ChlB and two ChlN subunits. [4Fe-4S] cluster serves as cofactor.

The protein resides in the plastid. Its subcellular location is the chloroplast. The enzyme catalyses chlorophyllide a + oxidized 2[4Fe-4S]-[ferredoxin] + 2 ADP + 2 phosphate = protochlorophyllide a + reduced 2[4Fe-4S]-[ferredoxin] + 2 ATP + 2 H2O. It functions in the pathway porphyrin-containing compound metabolism; chlorophyll biosynthesis (light-independent). Functionally, component of the dark-operative protochlorophyllide reductase (DPOR) that uses Mg-ATP and reduced ferredoxin to reduce ring D of protochlorophyllide (Pchlide) to form chlorophyllide a (Chlide). This reaction is light-independent. The NB-protein (ChlN-ChlB) is the catalytic component of the complex. The polypeptide is Light-independent protochlorophyllide reductase subunit B (Anthoceros angustus (Hornwort)).